The chain runs to 527 residues: Peptidoglycan O-acetyltransferase (527 aa).

The next 11 membrane-spanning stretches (helical) occupy residues Val11–Leu31, Leu55–Phe75, Leu96–Phe116, Leu131–Met151, His187–Val207, Asn228–Asp248, Leu280–Ile300, Leu352–Trp372, Met397–Phe417, Ile463–Leu483, and Leu505–Phe525. His363 is an active-site residue.

It belongs to the membrane-bound acyltransferase family.

The protein resides in the cell membrane. Its function is as follows. Catalyzes the O-acetylation of peptidoglycan (PG), an important mechanism that appears to confer lysozyme resistance and contributes to pathogen persistence in the host. In Helicobacter pylori (strain ATCC 700392 / 26695) (Campylobacter pylori), this protein is Peptidoglycan O-acetyltransferase (patA).